Reading from the N-terminus, the 142-residue chain is Large ribosomal subunit protein uL13c (142 aa).

The protein belongs to the universal ribosomal protein uL13 family. In terms of assembly, part of the 50S ribosomal subunit.

Its subcellular location is the plastid. The protein localises to the chloroplast. This Porphyra purpurea (Red seaweed) protein is Large ribosomal subunit protein uL13c.